A 254-amino-acid polypeptide reads, in one-letter code: Triosephosphate isomerase, cytosolic (254 aa).

Substrate is bound by residues Asn-10 and Lys-12. The Electrophile role is filled by His-96. Glu-166 (proton acceptor) is an active-site residue.

The protein belongs to the triosephosphate isomerase family. As to quaternary structure, homodimer.

It is found in the cytoplasm. It carries out the reaction D-glyceraldehyde 3-phosphate = dihydroxyacetone phosphate. It functions in the pathway carbohydrate biosynthesis; gluconeogenesis. The protein operates within carbohydrate degradation; glycolysis; D-glyceraldehyde 3-phosphate from glycerone phosphate: step 1/1. This is Triosephosphate isomerase, cytosolic (TPIP1) from Petunia hybrida (Petunia).